We begin with the raw amino-acid sequence, 120 residues long: UPF0231 protein CKO_03249 (120 aa).

The protein belongs to the UPF0231 family.

This Citrobacter koseri (strain ATCC BAA-895 / CDC 4225-83 / SGSC4696) protein is UPF0231 protein CKO_03249.